The primary structure comprises 126 residues: Large ribosomal subunit protein bL20 (126 aa).

The protein belongs to the bacterial ribosomal protein bL20 family.

Binds directly to 23S ribosomal RNA and is necessary for the in vitro assembly process of the 50S ribosomal subunit. It is not involved in the protein synthesizing functions of that subunit. This is Large ribosomal subunit protein bL20 from Frankia casuarinae (strain DSM 45818 / CECT 9043 / HFP020203 / CcI3).